The following is a 679-amino-acid chain: MDHLLLKTQTQIEQVMNVTNPNSIYIKGRLYFKGYKKIELHCFVDTGASLCIASKFVIPEEHWVNAERPIMVKIADGSSITISKVCKDIDLIIAGEIFKIPTVYQQESGIDFIIGNNFCQLYEPFIQFTDRVIFTKNKSYPVHITKLTRAVRVGIEGFLESMKKRSKTQQPEPVNISTNKIENPLEEIAILSEGRRLSEEKLFITQQRMQKIEELLEKVCSENPLDPNKTKQWMKASIKLSDPSKAIKVKPMKYSPMDREEFDKQIKELLDLKVIKPSKSPHMAPAFLVNNEAEKRRGKKRMVVNYKAMNKATIGDAYNLPNKDELLTLIRGKKIFSSFDCKSGFWQVLLDQESRPLTAFTCPQGHYEWNVVPFGLKQAPSIFQRHMDEAFRVFRKFCCVYVDDILVFSNNEEDHLLHVAMILQKCNQHGIILSKKKAQLFKKKINFLGLEIDEGTHKPQGHILEHINKFPDTLEDKKQLQRFLGILTYASDYIPKLAQIRKPLQAKLKENVPWKWTKEDTLYMQKVKKNLQGFPPLHHPLPEEKLIIETDASDDYWGGMLKAIKINEGTNTELICRYASGSFKAAERNYHSNDKETLAVINTIKKFSIYLTPVHFLIRTDNTHFKSFVNLNYKGDSKLGRNIRWQAWLSHYSFDVEHIKGTDNHFADFLSREFNKVNS.

The protease stretch occupies residues 40-130 (LHCFVDTGAS…LYEPFIQFTD (91 aa)). Residue D45 is part of the active site. The Reverse transcriptase domain occupies 272–452 (LKVIKPSKSP…KKINFLGLEI (181 aa)).

The protein belongs to the caulimoviridae enzymatic polyprotein family.

It carries out the reaction DNA(n) + a 2'-deoxyribonucleoside 5'-triphosphate = DNA(n+1) + diphosphate. In terms of biological role, encodes for at least two polypeptides: protease (PR) and reverse transcriptase (RT). The protease processes the polyprotein in cis. Reverse transcriptase is multifunctional enzyme that converts the viral RNA genome into dsDNA in viral cytoplasmic capsids. This enzyme displays a DNA polymerase activity that can copy either DNA or RNA templates, and a ribonuclease H (RNase H) activity that cleaves the RNA strand of RNA-DNA heteroduplexes in a partially processive 3'- to 5'-endonucleasic mode. Neo-synthesized pregenomic RNA (pgRNA) are encapsidated, and reverse-transcribed inside the nucleocapsid. Partial (+)DNA is synthesized from the (-)DNA template and generates the relaxed circular DNA (RC-DNA) genome. After budding and infection, the RC-DNA migrates in the nucleus, and is converted into a plasmid-like covalently closed circular DNA (cccDNA). This chain is Enzymatic polyprotein, found in Cauliflower mosaic virus (strain CM-1841) (CaMV).